Here is a 140-residue protein sequence, read N- to C-terminus: Sex-regulated protein janus-B (140 aa).

A substrate-binding site is contributed by R42. H69 functions as the Proton acceptor in the catalytic mechanism. Position 110 to 112 (110 to 112 (CKT)) interacts with substrate.

This sequence belongs to the janus family.

Its function is as follows. JanA and janB regulate somatic sex differentiation. This chain is Sex-regulated protein janus-B (janB), found in Drosophila pseudoobscura pseudoobscura (Fruit fly).